A 281-amino-acid chain; its full sequence is Proline iminopeptidase PfmaB (281 aa).

Residues 23 to 267 (PLVITLHGGR…NANHSVHVEK (245 aa)) enclose the AB hydrolase-1 domain.

It belongs to the peptidase S33 family.

The enzyme catalyses Release of N-terminal proline from a peptide.. In terms of biological role, proline iminopeptidase; part of the gene cluster that mediates the biosynthesis of dihydroxynaphthalene (DHN)-melanin, a bluish-green pigment forming a dark layer in the conidial wall that protects the conidia from UV radiations. The first step of the pathway is the production of the pentaketide 1,3,6,8-tetrahydroxynaphthalene (1,3,6,8-THN or T4HN) by the polyketide synthase PfmaE though condensation of acetyl-CoA with malonyl-CoA. T4HN is not stable and easily oxidizes into the stable form flaviolin. T4HN is also substrate of the hydroxynaphthalene reductase PfmaG to yield scytalone. The scytalone dehydratase PfmaJ then reduces scytalone to 1,3,8-THN. 1,3,8-THN is then substrate of the hydroxynaphthalene reductase PfmaI to yield vermelone. Vermelone is further converted by the multicopper oxidase PfmaD to 1,8-DHN. Finally the laccase PFICI_06862 transforms 1,8-DHN to DHN-melanin. The roles of the 5-oxoprolinase PfmaA and the proline iminopeptidase PfmaB within the cluster have not been elucidated yet. This Pestalotiopsis fici (strain W106-1 / CGMCC3.15140) protein is Proline iminopeptidase PfmaB.